Reading from the N-terminus, the 503-residue chain is Alpha-1-syntrophin (503 aa).

PH domains follow at residues 6-263 and 287-399; these read RAPR…AQIG and DIKQ…DGCH. The segment at 40–68 is disordered; it reads LTVSPADGEPGPEPEPAQLNGAAEPGAAP. Positions 81-164 constitute a PDZ domain; that stretch reads RVTVRKADAG…EVVLEVKYMK (84 aa). Ser-95, Ser-178, Ser-183, Ser-187, and Ser-194 each carry phosphoserine. Positions 177–203 are disordered; it reads TSVGWDSPPASPLQRQPSSPGPQPRNL. One can recognise an SU domain in the interval 447 to 503; the sequence is PFEKLQMSSDDGTSLLFLDFGGAEGEIQLDLHSCPKTMVFIIHSFLSAKVTRLGLLA. Residues 481-503 form a calmodulin-binding region; the sequence is PKTMVFIIHSFLSAKVTRLGLLA.

The protein belongs to the syntrophin family. In terms of assembly, monomer and homodimer. Interacts with MAPK12, TGFA, GA and F-actin. Interacts with the other members of the syntrophin family: SNTB1 and SNTB2; with dystrophin protein DMD and related proteins DTNA and UTRN; SGCG and SGCA of the dystrophin glycoprotein complex; NOS1; GRB2; calmodulin and the sodium channel proteins SCN4A and SCN5A. Interacts with MYOC; regulates muscle hypertrophy. Interacts with DTNB. Phosphorylated by CaM-kinase II. Phosphorylation may inhibit the interaction with DMD. In terms of tissue distribution, high expression in skeletal muscle. Expressed at intermediate level in heart, kidney and brain, and at low level in intestine, liver, lung and testis.

It is found in the cell membrane. Its subcellular location is the sarcolemma. It localises to the cell junction. The protein resides in the cytoplasm. The protein localises to the cytoskeleton. In terms of biological role, adapter protein that binds to and probably organizes the subcellular localization of a variety of membrane proteins. May link various receptors to the actin cytoskeleton and the extracellular matrix via the dystrophin glycoprotein complex. Plays an important role in synapse formation and in the organization of UTRN and acetylcholine receptors at the neuromuscular synapse. Binds to phosphatidylinositol 4,5-bisphosphate. This is Alpha-1-syntrophin (Snta1) from Mus musculus (Mouse).